The following is a 286-amino-acid chain: Pyridoxal kinase PdxY (286 aa).

Substrate is bound by residues Ser9 and 44-45; that span reads TQ. Residues Asp111, Ala143, Glu148, Lys181, and 208–211 each bind ATP; that span reads RPLV. A substrate-binding site is contributed by Asp222.

The protein belongs to the pyridoxine kinase family. PdxY subfamily. In terms of assembly, homodimer. Mg(2+) serves as cofactor.

The enzyme catalyses pyridoxal + ATP = pyridoxal 5'-phosphate + ADP + H(+). It participates in cofactor metabolism; pyridoxal 5'-phosphate salvage; pyridoxal 5'-phosphate from pyridoxal: step 1/1. In terms of biological role, pyridoxal kinase involved in the salvage pathway of pyridoxal 5'-phosphate (PLP). Catalyzes the phosphorylation of pyridoxal to PLP. The polypeptide is Pyridoxal kinase PdxY (Pectobacterium atrosepticum (strain SCRI 1043 / ATCC BAA-672) (Erwinia carotovora subsp. atroseptica)).